The primary structure comprises 655 residues: Protein npp-24 (655 aa).

A helical transmembrane segment spans residues 263–283 (ICSVFVLVSGGGVLSHLVVFP).

It localises to the membrane. This Caenorhabditis elegans protein is Protein npp-24.